A 348-amino-acid chain; its full sequence is Ketol-acid reductoisomerase (NADP(+)) (348 aa).

The 179-residue stretch at 1-179 folds into the KARI N-terminal Rossmann domain; the sequence is MDVHYDADPA…GGTHAGVIET (179 aa). NADP(+) is bound by residues 22 to 25, Arg45, Ser48, Ser50, and 80 to 83; these read YGSQ and DQHQ. Residue His105 is part of the active site. Gly131 lines the NADP(+) pocket. The region spanning 180–325 is the KARI C-terminal knotted domain; it reads TFKDETETDL…QTLRGMMPWL (146 aa). Mg(2+) contacts are provided by Asp188, Glu192, Glu224, and Glu228. Ser249 lines the substrate pocket. The segment at 323 to 348 is disordered; it reads PWLNGDETSADEDAPDAADTAPASSS. A compositionally biased stretch (low complexity) spans 339–348; sequence AADTAPASSS.

This sequence belongs to the ketol-acid reductoisomerase family. The cofactor is Mg(2+).

It catalyses the reaction (2R)-2,3-dihydroxy-3-methylbutanoate + NADP(+) = (2S)-2-acetolactate + NADPH + H(+). It carries out the reaction (2R,3R)-2,3-dihydroxy-3-methylpentanoate + NADP(+) = (S)-2-ethyl-2-hydroxy-3-oxobutanoate + NADPH + H(+). Its pathway is amino-acid biosynthesis; L-isoleucine biosynthesis; L-isoleucine from 2-oxobutanoate: step 2/4. It functions in the pathway amino-acid biosynthesis; L-valine biosynthesis; L-valine from pyruvate: step 2/4. In terms of biological role, involved in the biosynthesis of branched-chain amino acids (BCAA). Catalyzes an alkyl-migration followed by a ketol-acid reduction of (S)-2-acetolactate (S2AL) to yield (R)-2,3-dihydroxy-isovalerate. In the isomerase reaction, S2AL is rearranged via a Mg-dependent methyl migration to produce 3-hydroxy-3-methyl-2-ketobutyrate (HMKB). In the reductase reaction, this 2-ketoacid undergoes a metal-dependent reduction by NADPH to yield (R)-2,3-dihydroxy-isovalerate. This is Ketol-acid reductoisomerase (NADP(+)) from Salinibacter ruber (strain DSM 13855 / M31).